Reading from the N-terminus, the 209-residue chain is Imidazole glycerol phosphate synthase subunit HisH (209 aa).

The region spanning 1 to 205 (MIAIIDYGMG…QGVVEAWKSS (205 aa)) is the Glutamine amidotransferase type-1 domain. Cys79 acts as the Nucleophile in catalysis. Active-site residues include His180 and Glu182.

Heterodimer of HisH and HisF.

The protein resides in the cytoplasm. The enzyme catalyses 5-[(5-phospho-1-deoxy-D-ribulos-1-ylimino)methylamino]-1-(5-phospho-beta-D-ribosyl)imidazole-4-carboxamide + L-glutamine = D-erythro-1-(imidazol-4-yl)glycerol 3-phosphate + 5-amino-1-(5-phospho-beta-D-ribosyl)imidazole-4-carboxamide + L-glutamate + H(+). It carries out the reaction L-glutamine + H2O = L-glutamate + NH4(+). Its pathway is amino-acid biosynthesis; L-histidine biosynthesis; L-histidine from 5-phospho-alpha-D-ribose 1-diphosphate: step 5/9. In terms of biological role, IGPS catalyzes the conversion of PRFAR and glutamine to IGP, AICAR and glutamate. The HisH subunit catalyzes the hydrolysis of glutamine to glutamate and ammonia as part of the synthesis of IGP and AICAR. The resulting ammonia molecule is channeled to the active site of HisF. The chain is Imidazole glycerol phosphate synthase subunit HisH from Bacillus cereus (strain B4264).